A 509-amino-acid polypeptide reads, in one-letter code: Histidine--tRNA ligase, cytoplasmic (509 aa).

Alanine 2 is modified (N-acetylalanine). One can recognise a WHEP-TRS domain in the interval 3-59; that stretch reads ERAALEELVKLQGERVRGLKQQKASAELIEEEVAKLLKLKAQLGPDESKQKFVLKTP. A Phosphoserine modification is found at serine 66. L-histidine-binding positions include 130–132, arginine 157, glutamine 173, aspartate 177, arginine 326, and 330–331; these read DLT and YY. Serine 356 carries the phosphoserine modification.

It belongs to the class-II aminoacyl-tRNA synthetase family. As to quaternary structure, homodimer. As to expression, brain, heart, liver and kidney.

Its subcellular location is the cytoplasm. The catalysed reaction is tRNA(His) + L-histidine + ATP = L-histidyl-tRNA(His) + AMP + diphosphate + H(+). Catalyzes the ATP-dependent ligation of histidine to the 3'-end of its cognate tRNA, via the formation of an aminoacyl-adenylate intermediate (His-AMP). Plays a role in axon guidance. The polypeptide is Histidine--tRNA ligase, cytoplasmic (Homo sapiens (Human)).